We begin with the raw amino-acid sequence, 323 residues long: Methenyltetrahydromethanopterin cyclohydrolase (323 aa).

Belongs to the MCH family.

The protein localises to the cytoplasm. The enzyme catalyses 5,10-methenyl-5,6,7,8-tetrahydromethanopterin + H2O = N(5)-formyl-5,6,7,8-tetrahydromethanopterin + H(+). It functions in the pathway one-carbon metabolism; methanogenesis from CO(2); 5,10-methenyl-5,6,7,8-tetrahydromethanopterin from CO(2): step 3/3. Its function is as follows. Catalyzes the reversible interconversion of 5-formyl-H(4)MPT to methenyl-H(4)MPT(+). This Methanococcus vannielii (strain ATCC 35089 / DSM 1224 / JCM 13029 / OCM 148 / SB) protein is Methenyltetrahydromethanopterin cyclohydrolase.